The sequence spans 78 residues: Consomatin Te1 (78 aa).

An N-terminal signal peptide occupies residues 1-22; sequence MQTAYWMMVMMMVWITAPLSEG. A propeptide spanning residues 23–56 is cleaved from the precursor; the sequence is GQLNDVIRGLVPDNLAPQLVLQSLDSRRHPHGIR. Cysteines 63 and 68 form a disulfide. D-tryptophan is present on tryptophan 65. Proline 69, proline 70, and proline 72 each carry 4-hydroxyproline. Positions 74–78 are excised as a propeptide; that stretch reads RRLGS.

It belongs to the conotoxin C superfamily. Consomatin family. As to expression, expressed by the venom duct.

The protein localises to the secreted. Its function is as follows. Moderately activates human somatostatin receptors (SSTR) with a preferential activation of SSTR1 and SSTR4. In vivo, does not cause behavioral changes in mice within a few minutes of intracranial injection, but causes a progressive loss of movement thereafter. Four to five hours after injection, mice recover, even with the highest dose tested. Shows antinociception and antihyperalgesia activities in two mouse models of acute pain, most probably by acting outside the central nervous system. This is Consomatin Te1 from Conus terebra (Sea snail).